Reading from the N-terminus, the 421-residue chain is Lipid II:glycine glycyltransferase (421 aa).

It belongs to the FemABX family. In terms of assembly, monomer.

It localises to the cytoplasm. The enzyme catalyses beta-D-GlcNAc-(1-&gt;4)-Mur2Ac(oyl-L-Ala-D-isoglutaminyl-L-Lys-D-Ala-D-Ala)-di-trans,octa-cis-undecaprenyl diphosphate + glycyl-tRNA(Gly) = beta-D-GlcNAc-(1-&gt;4)-Mur2Ac(oyl-L-Ala-D-isoglutaminyl-L-Lys-(N(6)-Gly)-D-Ala-D-Ala)-di-trans,octa-cis-undecaprenyl diphosphate + tRNA(Gly) + H(+). Catalyzes the incorporation of the first glycine of the pentaglycine interpeptide bridge, which is characteristic of the S.aureus peptidoglycan. This glycine is added to the epsilon-amino group of the L-lysine of the membrane-bound lipid II intermediate (GlcNAc-(beta-1,4)-N-acetylmuramic acid(-L-Ala-D-iGln-L-Lys-D-Ala-D-Ala)-pyrophosphoryl-undecaprenol), using glycyl-tRNA(Gly) as donor, in a ribosome-independent mechanism. This chain is Lipid II:glycine glycyltransferase (femX), found in Staphylococcus aureus (strain MSSA476).